A 442-amino-acid chain; its full sequence is tRNA-2-methylthio-N(6)-dimethylallyladenosine synthase (442 aa).

The region spanning 5-122 (KKVFIKTLGC…LPEMIKRKQS (118 aa)) is the MTTase N-terminal domain. [4Fe-4S] cluster is bound by residues Cys-14, Cys-51, Cys-85, Cys-159, Cys-163, and Cys-166. Residues 145-378 (KAEGAKAYVS…DLLNSNAQII (234 aa)) form the Radical SAM core domain. The 63-residue stretch at 380–442 (RQMVGTEQRI…LPNSLRGELI (63 aa)) folds into the TRAM domain.

The protein belongs to the methylthiotransferase family. MiaB subfamily. Monomer. The cofactor is [4Fe-4S] cluster.

It localises to the cytoplasm. The enzyme catalyses N(6)-dimethylallyladenosine(37) in tRNA + (sulfur carrier)-SH + AH2 + 2 S-adenosyl-L-methionine = 2-methylsulfanyl-N(6)-dimethylallyladenosine(37) in tRNA + (sulfur carrier)-H + 5'-deoxyadenosine + L-methionine + A + S-adenosyl-L-homocysteine + 2 H(+). In terms of biological role, catalyzes the methylthiolation of N6-(dimethylallyl)adenosine (i(6)A), leading to the formation of 2-methylthio-N6-(dimethylallyl)adenosine (ms(2)i(6)A) at position 37 in tRNAs that read codons beginning with uridine. The chain is tRNA-2-methylthio-N(6)-dimethylallyladenosine synthase from Francisella philomiragia subsp. philomiragia (strain ATCC 25017 / CCUG 19701 / FSC 153 / O#319-036).